Reading from the N-terminus, the 265-residue chain is Apolipoprotein A-I (265 aa).

Residues 1 to 18 (MKAVVLTLAVLFLTGSQA) form the signal peptide. 2 consecutive repeat copies span residues 67–88 (LKLV…EHLG) and 89–110 (PVAQ…REIN). The segment at 67-265 (LKLVDNWDTL…IDEAAKKLTA (199 aa)) is 10 X approximate tandem repeats. A 3; half-length repeat occupies 111–121 (KDLEDVRQKTQ). A run of 5 repeats spans residues 122–143 (PFLD…QKVE), 144–165 (PLSA…EQVT), 166–187 (PLGE…TQLA), 188–209 (PYSE…EGGS), and 210–231 (ASLA…EKAK). At Met-193 the chain carries Methionine sulfoxide. One copy of the 9; half-length repeat lies at 232-242 (PVLEDIHQGLM). Met-242 and Met-244 each carry methionine sulfoxide. Repeat 10 spans residues 243–265 (PMWESFKTGVLNVIDEAAKKLTA).

The protein belongs to the apolipoprotein A1/A4/E family. Homodimer. Interacts with APOA1BP and CLU. Component of a sperm activating protein complex (SPAP), consisting of APOA1, an immunoglobulin heavy chain, an immunoglobulin light chain and albumin. Interacts with NDRG1. Interacts with SCGB3A2. Interacts with NAXE and YJEFN3. Post-translationally, glycosylated. Palmitoylated. In terms of processing, phosphorylation sites are present in the extracellular medium. As to expression, major protein of plasma HDL, also found in chylomicrons.

It localises to the secreted. In terms of biological role, participates in the reverse transport of cholesterol from tissues to the liver for excretion by promoting cholesterol efflux from tissues and by acting as a cofactor for the lecithin cholesterol acyltransferase (LCAT). As part of the SPAP complex, activates spermatozoa motility. The sequence is that of Apolipoprotein A-I (APOA1) from Tupaia belangeri (Common tree shrew).